A 227-amino-acid polypeptide reads, in one-letter code: Cytidylate kinase (227 aa).

10 to 18 (GPASSGKST) lines the ATP pocket.

The protein belongs to the cytidylate kinase family. Type 1 subfamily.

Its subcellular location is the cytoplasm. It catalyses the reaction CMP + ATP = CDP + ADP. The catalysed reaction is dCMP + ATP = dCDP + ADP. The protein is Cytidylate kinase of Streptococcus agalactiae serotype Ia (strain ATCC 27591 / A909 / CDC SS700).